The primary structure comprises 64 residues: UPF0434 protein BOV_A0835 (64 aa).

Belongs to the UPF0434 family.

This is UPF0434 protein BOV_A0835 from Brucella ovis (strain ATCC 25840 / 63/290 / NCTC 10512).